We begin with the raw amino-acid sequence, 346 residues long: tRNA N6-adenosine threonylcarbamoyltransferase (346 aa).

Residues His-111 and His-115 each contribute to the Fe cation site. Substrate is bound by residues 134–138 (LVSGG), Asp-167, Gly-180, and Asn-279. Asp-307 lines the Fe cation pocket.

The protein belongs to the KAE1 / TsaD family. Requires Fe(2+) as cofactor.

The protein localises to the cytoplasm. It carries out the reaction L-threonylcarbamoyladenylate + adenosine(37) in tRNA = N(6)-L-threonylcarbamoyladenosine(37) in tRNA + AMP + H(+). In terms of biological role, required for the formation of a threonylcarbamoyl group on adenosine at position 37 (t(6)A37) in tRNAs that read codons beginning with adenine. Is involved in the transfer of the threonylcarbamoyl moiety of threonylcarbamoyl-AMP (TC-AMP) to the N6 group of A37, together with TsaE and TsaB. TsaD likely plays a direct catalytic role in this reaction. This chain is tRNA N6-adenosine threonylcarbamoyltransferase, found in Burkholderia pseudomallei (strain 1106a).